A 312-amino-acid polypeptide reads, in one-letter code: tRNA dimethylallyltransferase (312 aa).

18–25 (GPTASGKS) lines the ATP pocket. A substrate-binding site is contributed by 20–25 (TASGKS). 2 interaction with substrate tRNA regions span residues 43–46 (DSMQ) and 167–171 (QRILR).

Belongs to the IPP transferase family. In terms of assembly, monomer. Mg(2+) serves as cofactor.

It carries out the reaction adenosine(37) in tRNA + dimethylallyl diphosphate = N(6)-dimethylallyladenosine(37) in tRNA + diphosphate. Its function is as follows. Catalyzes the transfer of a dimethylallyl group onto the adenine at position 37 in tRNAs that read codons beginning with uridine, leading to the formation of N6-(dimethylallyl)adenosine (i(6)A). In Azorhizobium caulinodans (strain ATCC 43989 / DSM 5975 / JCM 20966 / LMG 6465 / NBRC 14845 / NCIMB 13405 / ORS 571), this protein is tRNA dimethylallyltransferase.